The following is a 214-amino-acid chain: Large ribosomal subunit protein bL25 (214 aa).

It belongs to the bacterial ribosomal protein bL25 family. CTC subfamily. Part of the 50S ribosomal subunit; part of the 5S rRNA/L5/L18/L25 subcomplex. Contacts the 5S rRNA. Binds to the 5S rRNA independently of L5 and L18.

Functionally, this is one of the proteins that binds to the 5S RNA in the ribosome where it forms part of the central protuberance. This Polynucleobacter necessarius subsp. necessarius (strain STIR1) protein is Large ribosomal subunit protein bL25.